The primary structure comprises 846 residues: Envelope glycoprotein gp160 (846 aa).

A signal peptide spans 1–31 (MRAREKERNCQNLWKWGIMLLGMLMTCSAAE). At 32-674 (DLWVTVYYGV…ITKWLWYIKL (643 aa)) the chain is on the extracellular side. A disulfide bond links Cys-53 and Cys-73. Asn-87, Asn-129, Asn-151, Asn-179, Asn-182, Asn-229, Asn-236, Asn-257, Asn-271, Asn-284, and Asn-290 each carry an N-linked (GlcNAc...) asparagine; by host glycan. 5 cysteine pairs are disulfide-bonded: Cys-118-Cys-200, Cys-125-Cys-191, Cys-130-Cys-152, Cys-213-Cys-242, and Cys-223-Cys-234. The V1 stretch occupies residues 130 to 151 (CTDELRNSKGNGKVEEEEKRKN). The segment at 152–191 (CSFNVRDKREQVYALFYKLDIVPIDNNNRTNSTNYRLINC) is V2. A V3 region spans residues 291–327 (CTRPYKYTRQRTSIGLRQSLYTITGKKKKTGYIGQAH). Residues Cys-291 and Cys-328 are joined by a disulfide bond. Asn-351 carries N-linked (GlcNAc...) asparagine; by host glycosylation. A CD4-binding loop region spans residues 360 to 370 (SSGGDPEITSH). Disulfide bonds link Cys-374–Cys-435 and Cys-381–Cys-408. The tract at residues 381 to 408 (CNTSRLFNSTWNQTNSTGFNNGTVTLPC) is V4. 8 N-linked (GlcNAc...) asparagine; by host glycosylation sites follow: Asn-382, Asn-388, Asn-392, Asn-395, Asn-401, Asn-438, Asn-451, and Asn-452. V5 stretches follow at residues 450-461 (ANNSSHETIRPG) and 453-461 (SSHETIRPG). The segment at 502–522 (AIGLGAVFLGFLGAAGSTMGA) is fusion peptide. An immunosuppression region spans residues 564–582 (KQLQARVLAVERYLRDQQL). Cysteines 588 and 594 form a disulfide. Asn-601, Asn-606, Asn-615, and Asn-627 each carry an N-linked (GlcNAc...) asparagine; by host glycan. Residues 623 to 657 (REIDNYTGLIYSLIEESQIQQEKNEKELLELDKWA) adopt a coiled-coil conformation. Residues 652–673 (ELDKWASLWNWFSITKWLWYIK) are MPER; binding to GalCer. The chain crosses the membrane as a helical span at residues 675–695 (FIMIVGGLIGLRIVFAVLSVV). Over 696 to 846 (NRVRQGYSPL…IRQGLERLLL (151 aa)) the chain is Cytoplasmic. The YXXL motif; contains endocytosis signal motif lies at 702-705 (YSPL). 2 S-palmitoyl cysteine; by host lipidation sites follow: Cys-754 and Cys-827. Positions 845 to 846 (LL) match the Di-leucine internalization motif motif.

The protein belongs to the HIV-1 env protein family. As to quaternary structure, the mature envelope protein (Env) consists of a homotrimer of non-covalently associated gp120-gp41 heterodimers. The resulting complex protrudes from the virus surface as a spike. There seems to be as few as 10 spikes on the average virion. Interacts with host CD4, CCR5 and CXCR4. Gp120 also interacts with the C-type lectins CD209/DC-SIGN and CLEC4M/DC-SIGNR (collectively referred to as DC-SIGN(R)). Gp120 and gp41 interact with GalCer. Gp120 interacts with host ITGA4/ITGB7 complex; on CD4+ T-cells, this interaction results in rapid activation of integrin ITGAL/LFA-1, which facilitates efficient cell-to-cell spreading of HIV-1. Gp120 interacts with cell-associated heparan sulfate; this interaction increases virus infectivity on permissive cells and may be involved in infection of CD4- cells. The mature envelope protein (Env) consists of a homotrimer of non-covalently associated gp120-gp41 heterodimers. The resulting complex protrudes from the virus surface as a spike. There seems to be as few as 10 spikes on the average virion. Highly glycosylated by host. The high number of glycan on the protein is reffered to as 'glycan shield' because it contributes to hide protein sequence from adaptive immune system. In terms of processing, palmitoylation of the transmembrane protein and of Env polyprotein (prior to its proteolytic cleavage) is essential for their association with host cell membrane lipid rafts. Palmitoylation is therefore required for envelope trafficking to classical lipid rafts, but not for viral replication. Post-translationally, specific enzymatic cleavages in vivo yield mature proteins. Envelope glycoproteins are synthesized as an inactive precursor that is heavily N-glycosylated and processed likely by host cell furin in the Golgi to yield the mature SU and TM proteins. The cleavage site between SU and TM requires the minimal sequence [KR]-X-[KR]-R. About 2 of the 9 disulfide bonds of gp41 are reduced by P4HB/PDI, following binding to CD4 receptor.

It is found in the virion membrane. The protein localises to the host cell membrane. The protein resides in the host endosome membrane. Functionally, oligomerizes in the host endoplasmic reticulum into predominantly trimers. In a second time, gp160 transits in the host Golgi, where glycosylation is completed. The precursor is then proteolytically cleaved in the trans-Golgi and thereby activated by cellular furin or furin-like proteases to produce gp120 and gp41. Attaches the virus to the host lymphoid cell by binding to the primary receptor CD4. This interaction induces a structural rearrangement creating a high affinity binding site for a chemokine coreceptor like CXCR4 and/or CCR5. Acts as a ligand for CD209/DC-SIGN and CLEC4M/DC-SIGNR, which are respectively found on dendritic cells (DCs), and on endothelial cells of liver sinusoids and lymph node sinuses. These interactions allow capture of viral particles at mucosal surfaces by these cells and subsequent transmission to permissive cells. HIV subverts the migration properties of dendritic cells to gain access to CD4+ T-cells in lymph nodes. Virus transmission to permissive T-cells occurs either in trans (without DCs infection, through viral capture and transmission), or in cis (following DCs productive infection, through the usual CD4-gp120 interaction), thereby inducing a robust infection. In trans infection, bound virions remain infectious over days and it is proposed that they are not degraded, but protected in non-lysosomal acidic organelles within the DCs close to the cell membrane thus contributing to the viral infectious potential during DCs' migration from the periphery to the lymphoid tissues. On arrival at lymphoid tissues, intact virions recycle back to DCs' cell surface allowing virus transmission to CD4+ T-cells. Its function is as follows. Acts as a class I viral fusion protein. Under the current model, the protein has at least 3 conformational states: pre-fusion native state, pre-hairpin intermediate state, and post-fusion hairpin state. During fusion of viral and target intracellular membranes, the coiled coil regions (heptad repeats) assume a trimer-of-hairpins structure, positioning the fusion peptide in close proximity to the C-terminal region of the ectodomain. The formation of this structure appears to drive apposition and subsequent fusion of viral and target cell membranes. Complete fusion occurs in host cell endosomes and is dynamin-dependent, however some lipid transfer might occur at the plasma membrane. The virus undergoes clathrin-dependent internalization long before endosomal fusion, thus minimizing the surface exposure of conserved viral epitopes during fusion and reducing the efficacy of inhibitors targeting these epitopes. Membranes fusion leads to delivery of the nucleocapsid into the cytoplasm. In Human immunodeficiency virus type 1 group M subtype D (isolate NDK) (HIV-1), this protein is Envelope glycoprotein gp160.